We begin with the raw amino-acid sequence, 49 residues long: Protein 19.5 (49 aa).

Residues 1–23 form the signal peptide; sequence MFRLLLNLLRHRVTYRFLVVLCA.

The polypeptide is Protein 19.5 (Escherichia phage T7 (Bacteriophage T7)).